Here is an 837-residue protein sequence, read N- to C-terminus: Anaphase-promoting complex subunit 2 (837 aa).

Phosphoserine is present on residues S233, S329, S485, S549, and S712. The segment at C478–S508 is disordered. Over residues Q483–V496 the composition is skewed to acidic residues. Y825 bears the Phosphotyrosine mark.

It belongs to the cullin family. As to quaternary structure, the mammalian APC/C is composed at least of 14 distinct subunits ANAPC1, ANAPC2, CDC27/APC3, ANAPC4, ANAPC5, CDC16/APC6, ANAPC7, CDC23/APC8, ANAPC10, ANAPC11, CDC26/APC12, ANAPC13, ANAPC15 and ANAPC16 that assemble into a complex of at least 19 chains with a combined molecular mass of around 1.2 MDa; APC/C interacts with FZR1 and FBXO5. In the context of the APC/C complex, directly interacts with UBE2C and UBE2S. Interacts (via cullin domain) with ANAPC11 and with UBCH10. Interacts with NEUROD2. Interacts with FBXO43; the interaction is direct.

Its pathway is protein modification; protein ubiquitination. Functionally, together with the RING-H2 protein ANAPC11, constitutes the catalytic component of the anaphase promoting complex/cyclosome (APC/C), a cell cycle-regulated E3 ubiquitin ligase that controls progression through mitosis and the G1 phase of the cell cycle. The APC/C complex acts by mediating ubiquitination and subsequent degradation of target proteins: it mainly mediates the formation of 'Lys-11'-linked polyubiquitin chains and, to a lower extent, the formation of 'Lys-48'- and 'Lys-63'-linked polyubiquitin chains. The APC/C complex catalyzes assembly of branched 'Lys-11'-/'Lys-48'-linked branched ubiquitin chains on target proteins. The CDC20-APC/C complex positively regulates the formation of synaptic vesicle clustering at active zone to the presynaptic membrane in postmitotic neurons. CDC20-APC/C-induced degradation of NEUROD2 drives presynaptic differentiation. The sequence is that of Anaphase-promoting complex subunit 2 (Anapc2) from Mus musculus (Mouse).